A 481-amino-acid chain; its full sequence is Uridine 5'-monophosphate synthase (481 aa).

The OPRTase stretch occupies residues 1-214 (MEVASQALGP…VFSAANHNGL (214 aa)). Phosphotyrosine is present on tyrosine 37. The domain linker stretch occupies residues 215–220 (PPPEKK). Positions 221-481 (ACKELSFGAR…EAYLSRLAVQ (261 aa)) are OMPdecase. Serine 257 provides a ligand contact to orotidine 5'-phosphate. UMP-binding positions include serine 257, aspartate 259, and 281 to 283 (KTH). Orotidine 5'-phosphate is bound by residues lysine 281, lysine 314, aspartate 317, threonine 321, serine 372, 430–432 (QQY), and 450–451 (GR). Catalysis depends on for OMPdecase activity residues lysine 314 and aspartate 317. UMP-binding positions include aspartate 317, threonine 321, serine 372, 430-432 (QQY), and 450-451 (GR).

It in the N-terminal section; belongs to the purine/pyrimidine phosphoribosyltransferase family. This sequence in the C-terminal section; belongs to the OMP decarboxylase family. Homodimer; dimerization is required for enzymatic activity.

It catalyses the reaction orotidine 5'-phosphate + diphosphate = orotate + 5-phospho-alpha-D-ribose 1-diphosphate. The enzyme catalyses orotidine 5'-phosphate + H(+) = UMP + CO2. The protein operates within pyrimidine metabolism; UMP biosynthesis via de novo pathway; UMP from orotate: step 1/2. Its pathway is pyrimidine metabolism; UMP biosynthesis via de novo pathway; UMP from orotate: step 2/2. Bifunctional enzyme catalyzing the last two steps of de novo pyrimidine biosynthesis, orotate phosphoribosyltransferase (OPRT), which converts orotate to orotidine-5'-monophosphate (OMP), and orotidine-5'-monophosphate decarboxylase (ODC), the terminal enzymatic reaction that decarboxylates OMP to uridine monophosphate (UMP). In Mus musculus (Mouse), this protein is Uridine 5'-monophosphate synthase (Umps).